A 293-amino-acid polypeptide reads, in one-letter code: uncharacterized protein (293 aa).

The span at 1–10 shows a compositional bias: basic residues; the sequence is MHMQLRKRKR. Residues 1 to 28 form a disordered region; the sequence is MHMQLRKRKRVDYSGRNQTSDPPSTTTA. Residues 15-28 are compositionally biased toward polar residues; the sequence is GRNQTSDPPSTTTA.

It localises to the nucleus. This is an uncharacterized protein from Saccharomyces cerevisiae (strain ATCC 204508 / S288c) (Baker's yeast).